We begin with the raw amino-acid sequence, 122 residues long: Small ribosomal subunit protein uS13 (122 aa).

The segment at 95–122 is disordered; that stretch reads QLPVRGQRTHTNARTRKGKAKPIAGKKK.

It belongs to the universal ribosomal protein uS13 family. As to quaternary structure, part of the 30S ribosomal subunit. Forms a loose heterodimer with protein S19. Forms two bridges to the 50S subunit in the 70S ribosome.

Located at the top of the head of the 30S subunit, it contacts several helices of the 16S rRNA. In the 70S ribosome it contacts the 23S rRNA (bridge B1a) and protein L5 of the 50S subunit (bridge B1b), connecting the 2 subunits; these bridges are implicated in subunit movement. Contacts the tRNAs in the A and P-sites. The protein is Small ribosomal subunit protein uS13 of Beijerinckia indica subsp. indica (strain ATCC 9039 / DSM 1715 / NCIMB 8712).